The primary structure comprises 340 residues: UDP-N-acetylglucosamine--N-acetylmuramyl-(pentapeptide) pyrophosphoryl-undecaprenol N-acetylglucosamine transferase (340 aa).

UDP-N-acetyl-alpha-D-glucosamine contacts are provided by residues 15–17, asparagine 127, serine 184, isoleucine 230, and glutamine 275; that span reads TGG.

It belongs to the glycosyltransferase 28 family. MurG subfamily.

Its subcellular location is the cell inner membrane. It carries out the reaction di-trans,octa-cis-undecaprenyl diphospho-N-acetyl-alpha-D-muramoyl-L-alanyl-D-glutamyl-meso-2,6-diaminopimeloyl-D-alanyl-D-alanine + UDP-N-acetyl-alpha-D-glucosamine = di-trans,octa-cis-undecaprenyl diphospho-[N-acetyl-alpha-D-glucosaminyl-(1-&gt;4)]-N-acetyl-alpha-D-muramoyl-L-alanyl-D-glutamyl-meso-2,6-diaminopimeloyl-D-alanyl-D-alanine + UDP + H(+). Its pathway is cell wall biogenesis; peptidoglycan biosynthesis. In terms of biological role, cell wall formation. Catalyzes the transfer of a GlcNAc subunit on undecaprenyl-pyrophosphoryl-MurNAc-pentapeptide (lipid intermediate I) to form undecaprenyl-pyrophosphoryl-MurNAc-(pentapeptide)GlcNAc (lipid intermediate II). The polypeptide is UDP-N-acetylglucosamine--N-acetylmuramyl-(pentapeptide) pyrophosphoryl-undecaprenol N-acetylglucosamine transferase (Vesicomyosocius okutanii subsp. Calyptogena okutanii (strain HA)).